Consider the following 512-residue polypeptide: Phosphotransferase UL97 homolog (512 aa).

The active-site Proton acceptor is the D274.

It belongs to the protein kinase superfamily. Tyr protein kinase family.

It catalyses the reaction L-tyrosyl-[protein] + ATP = O-phospho-L-tyrosyl-[protein] + ADP + H(+). The sequence is that of Phosphotransferase UL97 homolog from Elephantid herpesvirus 1 (isolate Asian elephant/Berlin/Kiba/1998) (EIHV-1).